Reading from the N-terminus, the 424-residue chain is UDP-N-acetylglucosamine 1-carboxyvinyltransferase (424 aa).

Residue 22–23 (KN) coordinates phosphoenolpyruvate. Residue Arg-93 coordinates UDP-N-acetyl-alpha-D-glucosamine. The active-site Proton donor is Cys-117. A 2-(S-cysteinyl)pyruvic acid O-phosphothioketal modification is found at Cys-117. Residues 122–126 (RPIDL), Asp-307, and Val-329 contribute to the UDP-N-acetyl-alpha-D-glucosamine site.

Belongs to the EPSP synthase family. MurA subfamily.

The protein resides in the cytoplasm. It catalyses the reaction phosphoenolpyruvate + UDP-N-acetyl-alpha-D-glucosamine = UDP-N-acetyl-3-O-(1-carboxyvinyl)-alpha-D-glucosamine + phosphate. It functions in the pathway cell wall biogenesis; peptidoglycan biosynthesis. Functionally, cell wall formation. Adds enolpyruvyl to UDP-N-acetylglucosamine. This is UDP-N-acetylglucosamine 1-carboxyvinyltransferase from Pelodictyon phaeoclathratiforme (strain DSM 5477 / BU-1).